The following is a 209-amino-acid chain: NADH-ubiquinone oxidoreductase subunit 9 (209 aa).

The protein belongs to the complex I 30 kDa subunit family. In terms of assembly, complex I is composed of about 30 different subunits.

Its subcellular location is the mitochondrion inner membrane. It carries out the reaction a ubiquinone + NADH + 5 H(+)(in) = a ubiquinol + NAD(+) + 4 H(+)(out). In terms of biological role, core subunit of the mitochondrial membrane respiratory chain NADH dehydrogenase (Complex I) that is believed to belong to the minimal assembly required for catalysis. Complex I functions in the transfer of electrons from NADH to the respiratory chain. The immediate electron acceptor for the enzyme is believed to be ubiquinone. The sequence is that of NADH-ubiquinone oxidoreductase subunit 9 (NAD9) from Paramecium tetraurelia.